Reading from the N-terminus, the 289-residue chain is 18S rRNA (guanine-N(7))-methyltransferase RID2 (289 aa).

A disordered region spans residues 215 to 289 (KNEYDESCSE…FTSRKRRTRF (75 aa)). Positions 219 to 237 (DESCSEDDNSDDEESEEVG) are enriched in acidic residues. The span at 243 to 254 (RPRKRQRTNTKV) shows a compositional bias: basic residues. Over residues 255–264 (KGREWVLRKK) the composition is skewed to basic and acidic residues. Positions 268 to 275 (RRKGKNVP) match the Nuclear localization signal motif.

The protein belongs to the class I-like SAM-binding methyltransferase superfamily. BUD23/WBSCR22 family. In terms of tissue distribution, expressed in seedlings, roots and flowers.

It is found in the nucleus. The protein resides in the nucleoplasm. Its subcellular location is the cytoplasm. The protein localises to the perinuclear region. It localises to the nucleolus. The catalysed reaction is guanosine(1575) in yeast 18S rRNA + S-adenosyl-L-methionine = N(7)-methylguanosine(1575) in yeast 18S rRNA + S-adenosyl-L-homocysteine. In terms of biological role, essential protein. S-adenosyl-L-methionine-dependent methyltransferase that specifically methylates the N(7) position of a guanine in 18S rRNA. Requires the methyltransferase adapter protein TRM112 for full rRNA methyltransferase activity. Important for biogenesis end export of the 40S ribosomal subunit independent on its methyltransferase activity. Involved in the pre-rRNA processing steps in the nucleolus leading to small-subunit rRNA production independently of its RNA-modifying catalytic activity. Supports cell proliferation. Required for the initiation of lateral root primordia formation and for the root apical meristem (RAM) organization as well as for leaves development. During callus formation from hypocotyl and root explants, required for the initial stage of reactivation of cell proliferation in the hypocotyl stele. Involved in leaf polarity establishment by functioning cooperatively with AS2 to repress abaxial genes ARF3, ARF4, KAN1, KAN2, YAB1 and YAB5, and the knox homeobox genes KNAT1, KNAT2, KNAT6, and STM to promote adaxial development in leaf primordia at shoot apical meristems at high temperatures. This is 18S rRNA (guanine-N(7))-methyltransferase RID2 from Arabidopsis thaliana (Mouse-ear cress).